A 3093-amino-acid chain; its full sequence is Genome polyprotein (3093 aa).

The Peptidase S30 domain maps to 255-403 (KRLLRHVHQA…TTTGERIEYY (149 aa)). Residues H311, D323, and S355 each act as for P1 proteinase activity in the active site. Positions 690–809 (HYVPKVGYCY…ASELKEYEIG (120 aa)) constitute a Peptidase C6 domain. Catalysis depends on for helper component proteinase activity residues C698 and H769. The Helicase ATP-binding domain occupies 1215-1366 (RVLADKDNEF…AQKSLDIMTL (152 aa)). 1228-1235 (GHVGCGKS) contacts ATP. The short motif at 1316-1319 (DEVH) is the DEVH box element. One can recognise a Helicase C-terminal domain in the interval 1367–1546 (PTMTPLDFVK…QVPPVLRNVN (180 aa)). The Nuclear localization signal signature appears at 1883–1895 (DKVRKKANVHAMQ). An O-(5'-phospho-RNA)-tyrosine modification is found at Y1915. Residues 2041–2257 (SKALYGGPRC…VDVGGLYIHN (217 aa)) form the Peptidase C4 domain. Residues H2082, D2121, and C2193 each act as for nuclear inclusion protein A activity in the active site. The RdRp catalytic domain maps to 2516–2639 (EWFIDADGSQ…NANEEAKDVV (124 aa)). The segment covering 2800–2826 (NAAATSGATTPAQNVGAGTTTPAKATP) has biased composition (low complexity). Residues 2800 to 2842 (NAAATSGATTPAQNVGAGTTTPAKATPQSGRRPSFGSLIDNPI) are disordered.

Belongs to the potyviridae genome polyprotein family. Post-translationally, VPg is uridylylated by the polymerase and is covalently attached to the 5'-end of the genomic RNA. This uridylylated form acts as a nucleotide-peptide primer for the polymerase. Genome polyprotein of potyviruses undergoes post-translational proteolytic processing by the main proteinase NIa-pro resulting in the production of at least ten individual proteins. The P1 proteinase and the HC-pro cleave only their respective C-termini autocatalytically. 6K1 is essential for proper proteolytic separation of P3 from CI.

The protein resides in the host cytoplasmic vesicle. Its subcellular location is the virion. The enzyme catalyses RNA(n) + a ribonucleoside 5'-triphosphate = RNA(n+1) + diphosphate. It catalyses the reaction Hydrolyzes glutaminyl bonds, and activity is further restricted by preferences for the amino acids in P6 - P1' that vary with the species of potyvirus, e.g. Glu-Xaa-Xaa-Tyr-Xaa-Gln-|-(Ser or Gly) for the enzyme from tobacco etch virus. The natural substrate is the viral polyprotein, but other proteins and oligopeptides containing the appropriate consensus sequence are also cleaved.. The catalysed reaction is Hydrolyzes a Gly-|-Gly bond at its own C-terminus, commonly in the sequence -Tyr-Xaa-Val-Gly-|-Gly, in the processing of the potyviral polyprotein.. Its function is as follows. Required for aphid transmission and also has proteolytic activity. Only cleaves a Gly-Gly dipeptide at its own C-terminus. Interacts with virions and aphid stylets. Acts as a suppressor of RNA-mediated gene silencing, also known as post-transcriptional gene silencing (PTGS), a mechanism of plant viral defense that limits the accumulation of viral RNAs. May have RNA-binding activity. Has helicase activity. It may be involved in replication. Functionally, indispensable for virus replication. Reduces the abundance of host transcripts related to jasmonic acid biosynthesis therefore altering the host defenses. In order to increase its own stability, decreases host protein degradation pathways. In terms of biological role, indispensable for virus replication. Its function is as follows. Mediates the cap-independent, EIF4E-dependent translation of viral genomic RNAs. Binds to the cap-binding site of host EIF4E and thus interferes with the host EIF4E-dependent mRNA export and translation. VPg-RNA directly binds EIF4E and is a template for transcription. Also forms trimeric complexes with EIF4E-EIF4G, which are templates for translation. Has RNA-binding and proteolytic activities. Functionally, an RNA-dependent RNA polymerase that plays an essential role in the virus replication. In terms of biological role, involved in aphid transmission, cell-to-cell and systemis movement, encapsidation of the viral RNA and in the regulation of viral RNA amplification. The chain is Genome polyprotein from Brome streak virus (strain 11-Cal) (BStV).